A 180-amino-acid chain; its full sequence is Cytochrome b6-f complex subunit 4 (180 aa).

Helical transmembrane passes span 36–56, 95–115, and 131–151; these read LSYIFPVVILGTIACTIGLAV, LLGVLLMGSVPAGSLTVPFLE, and TVSLIGTAVALWLGIGAALPI.

The protein belongs to the cytochrome b family. PetD subfamily. As to quaternary structure, the 4 large subunits of the cytochrome b6-f complex are cytochrome b6, subunit IV (17 kDa polypeptide, petD), cytochrome f and the Rieske protein, while the 4 small subunits are petG, petL, petM and petN. The complex functions as a dimer.

The protein resides in the plastid. It is found in the chloroplast thylakoid membrane. In terms of biological role, component of the cytochrome b6-f complex, which mediates electron transfer between photosystem II (PSII) and photosystem I (PSI), cyclic electron flow around PSI, and state transitions. The protein is Cytochrome b6-f complex subunit 4 of Pinus thunbergii (Japanese black pine).